The primary structure comprises 392 residues: Metallophosphoesterase 1 (392 aa).

A helical transmembrane segment spans residues 25–45 (KLAALVFAVVLFCEFLIYYLV). A divalent metal cation is bound by residues Asp73, Asp115, Asn153, His246, His300, and His302. Residues 352–372 (DTVLATYCVAAGLLVVLILVH) form a helical membrane-spanning segment.

The protein belongs to the metallophosphoesterase superfamily. MPPE1 family. As to quaternary structure, interacts with GPI-anchor proteins (via the GPI portion). Interacts with TMED10. The cofactor is Mn(2+).

Its subcellular location is the endoplasmic reticulum-Golgi intermediate compartment membrane. Functionally, metallophosphoesterase that catalyzes the removal of a side-chain ethanolamine-phosphate (EtNP) from the second mannose of the GPI-anchor protein intermediate. Participates in the glycan remodeling steps of GPI-anchor maturation to allow an efficient transport of GPI-anchor proteins from the endoplasmic reticulum to the Golgi. This is Metallophosphoesterase 1 from Ailuropoda melanoleuca (Giant panda).